Reading from the N-terminus, the 122-residue chain is UPF0102 protein RHECIAT_CH0000358 (122 aa).

It belongs to the UPF0102 family.

This is UPF0102 protein RHECIAT_CH0000358 from Rhizobium etli (strain CIAT 652).